We begin with the raw amino-acid sequence, 166 residues long: Probable chemoreceptor glutamine deamidase CheD 1 (166 aa).

Belongs to the CheD family.

The enzyme catalyses L-glutaminyl-[protein] + H2O = L-glutamyl-[protein] + NH4(+). Functionally, probably deamidates glutamine residues to glutamate on methyl-accepting chemotaxis receptors (MCPs), playing an important role in chemotaxis. In Leptospira interrogans serogroup Icterohaemorrhagiae serovar copenhageni (strain Fiocruz L1-130), this protein is Probable chemoreceptor glutamine deamidase CheD 1.